Here is a 210-residue protein sequence, read N- to C-terminus: Protein GrpE (210 aa).

A compositionally biased stretch (basic and acidic residues) spans 1 to 12 (MSDQAKDERAPS). Disordered regions lie at residues 1-26 (MSDQAKDERAPSEAEAAEANAERTEG) and 191-210 (IAAEAPVEPGPVNEQAEKDA).

This sequence belongs to the GrpE family. In terms of assembly, homodimer.

The protein resides in the cytoplasm. Participates actively in the response to hyperosmotic and heat shock by preventing the aggregation of stress-denatured proteins, in association with DnaK and GrpE. It is the nucleotide exchange factor for DnaK and may function as a thermosensor. Unfolded proteins bind initially to DnaJ; upon interaction with the DnaJ-bound protein, DnaK hydrolyzes its bound ATP, resulting in the formation of a stable complex. GrpE releases ADP from DnaK; ATP binding to DnaK triggers the release of the substrate protein, thus completing the reaction cycle. Several rounds of ATP-dependent interactions between DnaJ, DnaK and GrpE are required for fully efficient folding. This is Protein GrpE from Mesorhizobium japonicum (strain LMG 29417 / CECT 9101 / MAFF 303099) (Mesorhizobium loti (strain MAFF 303099)).